Reading from the N-terminus, the 70-residue chain is ATP synthase subunit c (70 aa).

2 helical membrane passes run 4-24 (IAAAIAIGLSALGAGIGNGLI) and 45-65 (IMFIGIGLVEALPIIGVVIAF).

It belongs to the ATPase C chain family. In terms of assembly, F-type ATPases have 2 components, F(1) - the catalytic core - and F(0) - the membrane proton channel. F(1) has five subunits: alpha(3), beta(3), gamma(1), delta(1), epsilon(1). F(0) has three main subunits: a(1), b(2) and c(10-14). The alpha and beta chains form an alternating ring which encloses part of the gamma chain. F(1) is attached to F(0) by a central stalk formed by the gamma and epsilon chains, while a peripheral stalk is formed by the delta and b chains.

It is found in the cell membrane. Its function is as follows. F(1)F(0) ATP synthase produces ATP from ADP in the presence of a proton or sodium gradient. F-type ATPases consist of two structural domains, F(1) containing the extramembraneous catalytic core and F(0) containing the membrane proton channel, linked together by a central stalk and a peripheral stalk. During catalysis, ATP synthesis in the catalytic domain of F(1) is coupled via a rotary mechanism of the central stalk subunits to proton translocation. In terms of biological role, key component of the F(0) channel; it plays a direct role in translocation across the membrane. A homomeric c-ring of between 10-14 subunits forms the central stalk rotor element with the F(1) delta and epsilon subunits. The chain is ATP synthase subunit c from Staphylococcus haemolyticus (strain JCSC1435).